We begin with the raw amino-acid sequence, 490 residues long: Lipoprotein lipase (490 aa).

The signal sequence occupies residues Met-1–Gly-25. Residues Met-32 to Val-53 are interaction with GPIHBP1. Cys-54 and Cys-67 are oxidised to a cystine. Asn-70 carries N-linked (GlcNAc...) (complex) asparagine glycosylation. Position 121 is a 3'-nitrotyrosine (Tyr-121). The active-site Nucleophile is Ser-159. Asp-183 functions as the Charge relay system in the catalytic mechanism. Tyr-191 is modified (3'-nitrotyrosine). Residues Ala-194, Arg-197, Ser-199, and Asp-202 each contribute to the Ca(2+) site. A disulfide bond links Cys-243 and Cys-266. Residues Cys-243–Cys-266 are essential for determining substrate specificity. His-268 (charge relay system) is an active-site residue. Intrachain disulfides connect Cys-291–Cys-310 and Cys-302–Cys-305. The region spanning Phe-341–Lys-464 is the PLAT domain. The residue at position 343 (Tyr-343) is a 3'-nitrotyrosine. Asn-354 and Asn-386 each carry an N-linked (GlcNAc...) asparagine glycan. The important for interaction with lipoprotein particles stretch occupies residues Trp-417 to Trp-421. The segment at Arg-430–Lys-434 is important for heparin binding. Position 430–441 (Arg-430–Lys-441) interacts with heparin. Residues Val-443–Glu-467 are interaction with GPIHBP1. Cys-445 and Cys-465 are disulfide-bonded. A disordered region spans residues Ser-471 to Ala-490. A compositionally biased stretch (basic and acidic residues) spans Ala-480–Ala-490.

The protein belongs to the AB hydrolase superfamily. Lipase family. In terms of assembly, homodimer. Interacts with GPIHBP1 with 1:1 stoichiometry. Interacts with APOC2; the interaction activates LPL activity in the presence of lipids. Interaction with heparan sulfate proteoglycans is required to protect LPL against loss of activity. Associates with lipoprotein particles in blood plasma. Interacts with LMF1 and SEL1L; interaction with SEL1L is required to prevent aggregation of newly synthesized LPL in the endoplasmic reticulum (ER), and for normal export of LPL from the ER to the extracellular space. Post-translationally, N-glycan at Asn-70 is a triantennary complex oligosaccharide containing sialic acid, galactose, mannose, and N-acetylglucosamine, the reducing GlcNAc being sulfated at C6. Tyrosine nitration after lipopolysaccharide (LPS) challenge down-regulates the lipase activity.

It localises to the cell membrane. The protein resides in the secreted. It is found in the extracellular space. Its subcellular location is the extracellular matrix. The enzyme catalyses a triacylglycerol + H2O = a diacylglycerol + a fatty acid + H(+). The catalysed reaction is a 1,2-diacyl-sn-glycero-3-phosphocholine + H2O = a 2-acyl-sn-glycero-3-phosphocholine + a fatty acid + H(+). It catalyses the reaction 1,2,3-tri-(9Z-octadecenoyl)-glycerol + H2O = di-(9Z)-octadecenoylglycerol + (9Z)-octadecenoate + H(+). It carries out the reaction 1,2-di-(9Z-octadecenoyl)-sn-glycero-3-phosphocholine + H2O = (9Z-octadecenoyl)-sn-glycero-3-phosphocholine + (9Z)-octadecenoate + H(+). The enzyme catalyses 1,2,3-tributanoylglycerol + H2O = dibutanoylglycerol + butanoate + H(+). The catalysed reaction is 1,2-dihexadecanoyl-sn-glycero-3-phosphocholine + H2O = hexadecanoyl-sn-glycero-3-phosphocholine + hexadecanoate + H(+). Its activity is regulated as follows. Ca(2+) binding promotes protein stability and formation of the active homodimer. Functionally, key enzyme in triglyceride metabolism. Catalyzes the hydrolysis of triglycerides from circulating chylomicrons and very low density lipoproteins (VLDL), and thereby plays an important role in lipid clearance from the blood stream, lipid utilization and storage. Although it has both phospholipase and triglyceride lipase activities it is primarily a triglyceride lipase with low but detectable phospholipase activity. Mediates margination of triglyceride-rich lipoprotein particles in capillaries. Recruited to its site of action on the luminal surface of vascular endothelium by binding to GPIHBP1 and cell surface heparan sulfate proteoglycans. In Gallus gallus (Chicken), this protein is Lipoprotein lipase (LPL).